The following is a 436-amino-acid chain: MDKATVYYFVGIKGSGMSSLALILHDKGYQVEGSDIEQYTFTQKGLAAAGIKMLPFSEDNIREGLTVIAGNSFTDDHPEIKKAREMGLPVYRYHEFLGKLMEGFTSIGVAGTHGKTSTTGLLSHVLSHIAPTSYLIGDGTGKGTPDARFFVFEADEYRRHFVAYHPDYAIMTNVDFDHPDYYKDLADVQSAFQQFGNQVKKGIFAWGDDESLRHLDVDTPIYYYGTNDRDDFQAVNIKRTTKGSSFEVKYHDESLGKFEIPLFGEHNVLNSTAVIAVSYFEKVNLDEIRRELLDFSGVKRRFSEHQVGDMVMIDDYAHHPSEIKATLDAARQKYPDKEILAVFQPHTFSRTKALMDGFAASLSKADHVFLTNIFSSAREKSGDVSSKDLAAKLPNGGEIITTDDMSALTAYHNAVAVFMGAGDIQKYEKIYEDQMK.

Residue 111 to 117 participates in ATP binding; that stretch reads GTHGKTS.

The protein belongs to the MurCDEF family.

It localises to the cytoplasm. The enzyme catalyses UDP-N-acetyl-alpha-D-muramate + L-alanine + ATP = UDP-N-acetyl-alpha-D-muramoyl-L-alanine + ADP + phosphate + H(+). The protein operates within cell wall biogenesis; peptidoglycan biosynthesis. Functionally, cell wall formation. In Lactiplantibacillus plantarum (strain ATCC BAA-793 / NCIMB 8826 / WCFS1) (Lactobacillus plantarum), this protein is UDP-N-acetylmuramate--L-alanine ligase.